Consider the following 413-residue polypeptide: Multifunctional CCA protein (413 aa).

The ATP site is built by Gly8 and Arg11. CTP is bound by residues Gly8 and Arg11. 2 residues coordinate Mg(2+): Asp21 and Asp23. Positions 91, 143, and 146 each coordinate ATP. CTP is bound by residues Arg91, Arg143, and Arg146. The HD domain occupies 232–333 (TGVHVMMVVD…VRLFERSDAL (102 aa)).

The protein belongs to the tRNA nucleotidyltransferase/poly(A) polymerase family. Bacterial CCA-adding enzyme type 1 subfamily. Monomer. Can also form homodimers and oligomers. Mg(2+) is required as a cofactor. Ni(2+) serves as cofactor.

The enzyme catalyses a tRNA precursor + 2 CTP + ATP = a tRNA with a 3' CCA end + 3 diphosphate. It catalyses the reaction a tRNA with a 3' CCA end + 2 CTP + ATP = a tRNA with a 3' CCACCA end + 3 diphosphate. Its function is as follows. Catalyzes the addition and repair of the essential 3'-terminal CCA sequence in tRNAs without using a nucleic acid template. Adds these three nucleotides in the order of C, C, and A to the tRNA nucleotide-73, using CTP and ATP as substrates and producing inorganic pyrophosphate. tRNA 3'-terminal CCA addition is required both for tRNA processing and repair. Also involved in tRNA surveillance by mediating tandem CCA addition to generate a CCACCA at the 3' terminus of unstable tRNAs. While stable tRNAs receive only 3'-terminal CCA, unstable tRNAs are marked with CCACCA and rapidly degraded. The chain is Multifunctional CCA protein from Burkholderia orbicola (strain MC0-3).